The chain runs to 371 residues: 4-hydroxyphenylpyruvate dioxygenase-like protein (371 aa).

2 VOC domains span residues 7–135 (RLCH…LLQR) and 160–328 (HVDH…VFTK). Positions 163, 258, and 339 each coordinate Fe cation.

It belongs to the 4HPPD family. Requires Fe cation as cofactor.

It localises to the mitochondrion. It carries out the reaction 3-(4-hydroxyphenyl)pyruvate + O2 = (S)-4-hydroxymandelate + CO2. Its function is as follows. Iron-dependent dioxygenase that catalyzes the conversion of 4-hydroxyphenylpyruvate (4-HPPA) to 4-hydroxymandelate (4-HMA) in the mitochondria, one of the steps in the biosynthesis of coenzyme Q10 from tyrosine. The polypeptide is 4-hydroxyphenylpyruvate dioxygenase-like protein (Mus musculus (Mouse)).